We begin with the raw amino-acid sequence, 291 residues long: ATP synthase gamma chain (291 aa).

Belongs to the ATPase gamma chain family. In terms of assembly, F-type ATPases have 2 components, CF(1) - the catalytic core - and CF(0) - the membrane proton channel. CF(1) has five subunits: alpha(3), beta(3), gamma(1), delta(1), epsilon(1). CF(0) has three main subunits: a, b and c.

The protein localises to the cell inner membrane. Produces ATP from ADP in the presence of a proton gradient across the membrane. The gamma chain is believed to be important in regulating ATPase activity and the flow of protons through the CF(0) complex. The protein is ATP synthase gamma chain of Burkholderia mallei (strain NCTC 10247).